We begin with the raw amino-acid sequence, 176 residues long: Large ribosomal subunit protein eL20 (176 aa).

Lys-11 is covalently cross-linked (Glycyl lysine isopeptide (Lys-Gly) (interchain with G-Cter in SUMO2)). At Tyr-63 the chain carries Phosphotyrosine. Residue Ser-71 is modified to Phosphoserine. Lys-76 bears the N6-succinyllysine mark. The residue at position 123 (Ser-123) is a Phosphoserine. Glycyl lysine isopeptide (Lys-Gly) (interchain with G-Cter in SUMO2) cross-links involve residues Lys-128 and Lys-170.

This sequence belongs to the eukaryotic ribosomal protein eL20 family. Component of the large ribosomal subunit. Binds IPO9 with high affinity.

It localises to the cytoplasm. In terms of biological role, component of the large ribosomal subunit. The ribosome is a large ribonucleoprotein complex responsible for the synthesis of proteins in the cell. This Oryctolagus cuniculus (Rabbit) protein is Large ribosomal subunit protein eL20 (RPL18A).